The chain runs to 264 residues: S-adenosylmethionine decarboxylase proenzyme (264 aa).

The Schiff-base intermediate with substrate; via pyruvic acid role is filled by Ser112. At Ser112 the chain carries Pyruvic acid (Ser); by autocatalysis. His117 functions as the Proton acceptor; for processing activity in the catalytic mechanism. Catalysis depends on Cys140, which acts as the Proton donor; for catalytic activity.

It belongs to the prokaryotic AdoMetDC family. Type 2 subfamily. In terms of assembly, heterooctamer of four alpha and four beta chains arranged as a tetramer of alpha/beta heterodimers. It depends on pyruvate as a cofactor. Post-translationally, is synthesized initially as an inactive proenzyme. Formation of the active enzyme involves a self-maturation process in which the active site pyruvoyl group is generated from an internal serine residue via an autocatalytic post-translational modification. Two non-identical subunits are generated from the proenzyme in this reaction, and the pyruvate is formed at the N-terminus of the alpha chain, which is derived from the carboxyl end of the proenzyme. The post-translation cleavage follows an unusual pathway, termed non-hydrolytic serinolysis, in which the side chain hydroxyl group of the serine supplies its oxygen atom to form the C-terminus of the beta chain, while the remainder of the serine residue undergoes an oxidative deamination to produce ammonia and the pyruvoyl group blocking the N-terminus of the alpha chain.

The enzyme catalyses S-adenosyl-L-methionine + H(+) = S-adenosyl 3-(methylsulfanyl)propylamine + CO2. Its pathway is amine and polyamine biosynthesis; S-adenosylmethioninamine biosynthesis; S-adenosylmethioninamine from S-adenosyl-L-methionine: step 1/1. In terms of biological role, catalyzes the decarboxylation of S-adenosylmethionine to S-adenosylmethioninamine (dcAdoMet), the propylamine donor required for the synthesis of the polyamines spermine and spermidine from the diamine putrescine. This chain is S-adenosylmethionine decarboxylase proenzyme, found in Klebsiella pneumoniae (strain 342).